The sequence spans 710 residues: TRP-like ion channel pkd2 (710 aa).

An N-terminal signal peptide occupies residues 1 to 23 (MRLWRSPLLLLVVVVELFSWADA). 9 helical membrane passes run 173–193 (WVMCMVIGIPLLIFLLISPVL), 197–217 (ALWEIVETMITLFQFAQIQAL), 322–342 (FFATGFSFFIILLFFSLLVAM), 376–396 (FFYRVIFVGFTQMSVLSMWEI), 404–424 (LAFLSMYVIVDMAVLLCYAFV), 466–486 (FFYFTFPLLLITLVRSMFIGF), 492–512 (KVQGCAMFGISVVVFALMVIL), 525–545 (IGVALMNLISGSFILVMCQAF), and 555–575 (IGIIFFALNAITMLLLILGIF). Phosphoserine is present on residues serine 599 and serine 632. Residues 689–710 (RISENNNNAERRRKPLPNNAFR) are disordered.

Belongs to the transient receptor potential (TRP) ion channel family. As to quaternary structure, interacts with rho1.

The protein resides in the cell membrane. The protein localises to the golgi apparatus membrane. Its function is as follows. Acts as a key signaling component in the regulation of cell shape and cell wall synthesis through interaction with GTPase Rho1. The protein is TRP-like ion channel pkd2 (pkd2) of Schizosaccharomyces pombe (strain 972 / ATCC 24843) (Fission yeast).